The primary structure comprises 341 residues: Mytilin-2 (341 aa).

The first 24 residues, 1 to 24, serve as a signal peptide directing secretion; sequence MFKQSYQLCLVFLLFVCFYQSVKG.

As to expression, component of the organic matrix of calcified shell layers like nacre and prisms.

The protein resides in the secreted. In Mytilus californianus (California mussel), this protein is Mytilin-2.